A 415-amino-acid chain; its full sequence is Dynein assembly factor with WD repeat domains 1 (415 aa).

WD repeat units follow at residues 90–129, 132–174, 175–214, 217–256, 259–298, 301–340, 343–384, and 386–415; these read AHILPLTNVAFNKSGSSFITGSYDRTCKVWDTASGEELHT, GHRN…HTFR, GHTAEIVCLVFNPQSTLIATGSMDTTAKLWDIQSGEEALT, GHAAEIISLSFNTTGDRLITGSFDHTVSVWEIPSGRRIHT, GHRGEISSAQFNWDCSLIATASMDKSCKLWDSLNGKCVAT, GHDDEVLDVTFDSTGQLVATASADGTARVYSASSRKCLAK, GHEG…QVLK, and HTDEIFSCAFNYEGNTIITGSKDNTCRIWR.

The protein belongs to the WD repeat WDR69 family.

It is found in the cytoplasm. The protein resides in the cytoskeleton. The protein localises to the flagellum basal body. It localises to the flagellum axoneme. In terms of biological role, required for axonemal dynein assembly and ciliary motility in ciliated organs, including Kupffer's vesicle, during embryogenesis. Facilitates the onset of robust cilia motility during development. The sequence is that of Dynein assembly factor with WD repeat domains 1 (daw1) from Xenopus laevis (African clawed frog).